A 442-amino-acid chain; its full sequence is Serine--tRNA ligase (442 aa).

An L-serine-binding site is contributed by 249-251 (TSE). 280-282 (RSE) provides a ligand contact to ATP. An L-serine-binding site is contributed by Glu303. Residue 367-370 (EISS) participates in ATP binding. Ser402 is a binding site for L-serine.

Belongs to the class-II aminoacyl-tRNA synthetase family. Type-1 seryl-tRNA synthetase subfamily. In terms of assembly, homodimer. The tRNA molecule binds across the dimer.

The protein localises to the cytoplasm. It catalyses the reaction tRNA(Ser) + L-serine + ATP = L-seryl-tRNA(Ser) + AMP + diphosphate + H(+). It carries out the reaction tRNA(Sec) + L-serine + ATP = L-seryl-tRNA(Sec) + AMP + diphosphate + H(+). Its pathway is aminoacyl-tRNA biosynthesis; selenocysteinyl-tRNA(Sec) biosynthesis; L-seryl-tRNA(Sec) from L-serine and tRNA(Sec): step 1/1. Functionally, catalyzes the attachment of serine to tRNA(Ser). Is also able to aminoacylate tRNA(Sec) with serine, to form the misacylated tRNA L-seryl-tRNA(Sec), which will be further converted into selenocysteinyl-tRNA(Sec). The chain is Serine--tRNA ligase from Acidovorax sp. (strain JS42).